We begin with the raw amino-acid sequence, 559 residues long: Nuclear envelope integral membrane protein (559 aa).

A signal peptide spans 1-15 (MRLLTLALLVAGSLA). Asparagine 67, asparagine 81, and asparagine 114 each carry an N-linked (GlcNAc...) asparagine glycan. 5 helical membrane-spanning segments follow: residues 164-184 (YTSG…FIVW), 192-212 (IGVP…HFAW), 218-238 (IMIE…LISM), 267-287 (LIYF…ALII), and 290-310 (ICRG…KAVW). N-linked (GlcNAc...) asparagine glycans are attached at residues asparagine 408 and asparagine 465. Disordered stretches follow at residues 475 to 494 (RRDS…PRMP) and 510 to 559 (KNGR…DADE). Polar residues predominate over residues 517–526 (PSSSTASGMT). The segment covering 530–539 (YMRKARRIDA) has biased composition (basic and acidic residues).

This sequence belongs to the NEMP family.

It is found in the nucleus inner membrane. Functionally, contributes to nuclear envelope stiffness in germ cells. Required for fertility. This Caenorhabditis elegans protein is Nuclear envelope integral membrane protein.